The sequence spans 196 residues: uncharacterized protein (196 aa).

This sequence to E.coli YjaG.

This is an uncharacterized protein from Haemophilus influenzae (strain ATCC 51907 / DSM 11121 / KW20 / Rd).